A 505-amino-acid chain; its full sequence is ATP synthase subunit alpha, chloroplastic (505 aa).

170–177 (GDRQTGKT) is a binding site for ATP.

Belongs to the ATPase alpha/beta chains family. F-type ATPases have 2 components, CF(1) - the catalytic core - and CF(0) - the membrane proton channel. CF(1) has five subunits: alpha(3), beta(3), gamma(1), delta(1), epsilon(1). CF(0) has four main subunits: a, b, b' and c.

The protein localises to the plastid. It is found in the chloroplast thylakoid membrane. It catalyses the reaction ATP + H2O + 4 H(+)(in) = ADP + phosphate + 5 H(+)(out). Produces ATP from ADP in the presence of a proton gradient across the membrane. The alpha chain is a regulatory subunit. This chain is ATP synthase subunit alpha, chloroplastic, found in Oenothera parviflora (Small-flowered evening primrose).